The sequence spans 292 residues: Nitrogenase iron protein 2 (292 aa).

Residue glycine 12–serine 19 coordinates ATP. Cysteine 97 serves as a coordination point for [4Fe-4S] cluster. At arginine 100 the chain carries ADP-ribosylarginine; by dinitrogenase reductase ADP-ribosyltransferase. Cysteine 133 lines the [4Fe-4S] cluster pocket.

This sequence belongs to the NifH/BchL/ChlL family. Homodimer. It depends on [4Fe-4S] cluster as a cofactor. The reversible ADP-ribosylation of Arg-100 inactivates the nitrogenase reductase and regulates nitrogenase activity.

It catalyses the reaction N2 + 8 reduced [2Fe-2S]-[ferredoxin] + 16 ATP + 16 H2O = H2 + 8 oxidized [2Fe-2S]-[ferredoxin] + 2 NH4(+) + 16 ADP + 16 phosphate + 6 H(+). The key enzymatic reactions in nitrogen fixation are catalyzed by the nitrogenase complex, which has 2 components: the iron protein and the molybdenum-iron protein. The protein is Nitrogenase iron protein 2 (nifH2) of Paenibacillus durus (Paenibacillus azotofixans).